The sequence spans 700 residues: Calpain-2 catalytic subunit (700 aa).

Ala2 carries the post-translational modification N-acetylalanine. Residues 2–19 constitute a propeptide, anchors to the small subunit; it reads AGIAAKLVKDREAAEGLG. The region spanning 45 to 344 is the Calpain catalytic domain; that stretch reads LFQDPSFPAI…YSRLEICNLT (300 aa). 3 residues coordinate Ca(2+): Ile89, Gly91, and Asp96. Cys105 is a catalytic residue. Ca(2+) is bound by residues Glu175, Gln229, and Lys230. Active-site residues include His262 and Asn286. 3 residues coordinate Ca(2+): Glu292, Asp299, and Glu323. Positions 345 to 514 are domain III; the sequence is PDTLTSDTYK…KKADYQAVDD (170 aa). Residues 515–529 form a linker region; sequence EIEANLEEFDISEDD. The interval 530 to 700 is domain IV; that stretch reads IDDGFRRLFA…LISWLCFSVL (171 aa). Ca(2+) is bound by residues Ala542, Asp545, Glu547, Glu552, Asp585, Asp587, Ser589, Lys591, Glu596, Asp615, Asp617, Ser619, Thr621, Glu626, Asp658, and Asn661. EF-hand domains follow at residues 572-605 and 602-637; these read FSIE…TKIQ and TKIQ…AGFK. Residues 667-700 enclose the EF-hand 3 domain; the sequence is VRLETLFKIFKQLDPENTGTIELDLISWLCFSVL.

This sequence belongs to the peptidase C2 family. As to quaternary structure, forms a heterodimer with a small (regulatory) subunit (CAPNS1). Interacts with CPEB3; this leads to cleavage of CPEB3. It depends on Ca(2+) as a cofactor.

It is found in the cytoplasm. The protein resides in the cell membrane. It catalyses the reaction Broad endopeptidase specificity.. With respect to regulation, activated by 200-1000 micromolar concentrations of calcium and inhibited by calpastatin. In terms of biological role, calcium-regulated non-lysosomal thiol-protease which catalyzes limited proteolysis of substrates involved in cytoskeletal remodeling and signal transduction. Proteolytically cleaves MYOC at 'Arg-226'. Proteolytically cleaves CPEB3 following neuronal stimulation which abolishes CPEB3 translational repressor activity, leading to translation of CPEB3 target mRNAs. The protein is Calpain-2 catalytic subunit (CAPN2) of Macaca fascicularis (Crab-eating macaque).